The sequence spans 27 residues: Caerulein precursor fragment R4 (27 aa).

As to expression, expressed by the skin glands.

The protein resides in the secreted. Functionally, antimicrobial peptide. The protein is Caerulein precursor fragment R4 of Xenopus ruwenzoriensis (Uganda clawed frog).